A 338-amino-acid chain; its full sequence is Gibberellin 2-beta-dioxygenase 8 (338 aa).

One can recognise a Fe2OG dioxygenase domain in the interval 191–290 (NTCYLRMNRY…RFSTAYFMCP (100 aa)). Positions 215, 217, and 271 each coordinate Fe cation. R281 is an active-site residue. Position 281 (R281) interacts with 2-oxoglutarate.

Belongs to the iron/ascorbate-dependent oxidoreductase family. GA2OX subfamily. Requires Fe(2+) as cofactor.

The catalysed reaction is gibberellin A1 + 2-oxoglutarate + O2 = gibberellin A8 + succinate + CO2. It functions in the pathway plant hormone biosynthesis; gibberellin biosynthesis. Functionally, catalyzes the 2-beta-hydroxylation of gibberellins (GA) precursors, rendering them unable to be converted to active GAs. Hydroxylates the C20-GA GA12 and GA53, but is not active on C19-GAs, like GA1, GA4, GA9 and GA20. The polypeptide is Gibberellin 2-beta-dioxygenase 8 (GA2OX8) (Arabidopsis thaliana (Mouse-ear cress)).